The chain runs to 350 residues: Tetraacyldisaccharide 4'-kinase (350 aa).

49-56 (TTGGTGKT) is an ATP binding site.

This sequence belongs to the LpxK family.

The catalysed reaction is a lipid A disaccharide + ATP = a lipid IVA + ADP + H(+). Its pathway is glycolipid biosynthesis; lipid IV(A) biosynthesis; lipid IV(A) from (3R)-3-hydroxytetradecanoyl-[acyl-carrier-protein] and UDP-N-acetyl-alpha-D-glucosamine: step 6/6. Functionally, transfers the gamma-phosphate of ATP to the 4'-position of a tetraacyldisaccharide 1-phosphate intermediate (termed DS-1-P) to form tetraacyldisaccharide 1,4'-bis-phosphate (lipid IVA). The protein is Tetraacyldisaccharide 4'-kinase of Chlorobaculum tepidum (strain ATCC 49652 / DSM 12025 / NBRC 103806 / TLS) (Chlorobium tepidum).